The sequence spans 127 residues: Large ribosomal subunit protein bL17 (127 aa).

Belongs to the bacterial ribosomal protein bL17 family. As to quaternary structure, part of the 50S ribosomal subunit. Contacts protein L32.

This Haemophilus ducreyi (strain 35000HP / ATCC 700724) protein is Large ribosomal subunit protein bL17.